Reading from the N-terminus, the 191-residue chain is Ion-translocating oxidoreductase complex subunit B (191 aa).

The segment at 1–26 is hydrophobic; that stretch reads MSSLWIAIAAVSAIALVSGLILGFAA. Positions 32-90 constitute a 4Fe-4S domain; it reads EADPIVERIDALLPQSQCGQCGYPGCRPYAEAVANGEKINRCAPGGEAVMRNIAALLAV. Cys-49, Cys-52, Cys-57, Cys-73, Cys-116, Cys-119, Cys-122, Cys-126, Cys-146, Cys-149, Cys-152, and Cys-156 together coordinate [4Fe-4S] cluster. 4Fe-4S ferredoxin-type domains are found at residues 107–136 and 137–166; these read QVAL…GATR and ALHT…LVPV.

The protein belongs to the 4Fe4S bacterial-type ferredoxin family. RnfB subfamily. As to quaternary structure, the complex is composed of six subunits: RnfA, RnfB, RnfC, RnfD, RnfE and RnfG. The cofactor is [4Fe-4S] cluster.

Its subcellular location is the cell inner membrane. Functionally, part of a membrane-bound complex that couples electron transfer with translocation of ions across the membrane. This Edwardsiella ictaluri (strain 93-146) protein is Ion-translocating oxidoreductase complex subunit B.